The chain runs to 62 residues: Photosystem II reaction center protein Z (62 aa).

2 consecutive transmembrane segments (helical) span residues 8 to 28 (AVFA…VVFA) and 41 to 61 (FSGT…NSLI).

The protein belongs to the PsbZ family. As to quaternary structure, PSII is composed of 1 copy each of membrane proteins PsbA, PsbB, PsbC, PsbD, PsbE, PsbF, PsbH, PsbI, PsbJ, PsbK, PsbL, PsbM, PsbT, PsbY, PsbZ, Psb30/Ycf12, at least 3 peripheral proteins of the oxygen-evolving complex and a large number of cofactors. It forms dimeric complexes.

It localises to the plastid. It is found in the chloroplast thylakoid membrane. In terms of biological role, may control the interaction of photosystem II (PSII) cores with the light-harvesting antenna, regulates electron flow through the 2 photosystem reaction centers. PSII is a light-driven water plastoquinone oxidoreductase, using light energy to abstract electrons from H(2)O, generating a proton gradient subsequently used for ATP formation. In Citrus sinensis (Sweet orange), this protein is Photosystem II reaction center protein Z.